The following is a 232-amino-acid chain: tRNA (guanine-N(1)-)-methyltransferase (232 aa).

S-adenosyl-L-methionine is bound by residues G114 and 134 to 139 (IGDYIL).

The protein belongs to the RNA methyltransferase TrmD family. Homodimer.

It localises to the cytoplasm. The enzyme catalyses guanosine(37) in tRNA + S-adenosyl-L-methionine = N(1)-methylguanosine(37) in tRNA + S-adenosyl-L-homocysteine + H(+). Its function is as follows. Specifically methylates guanosine-37 in various tRNAs. This Wolbachia pipientis subsp. Culex pipiens (strain wPip) protein is tRNA (guanine-N(1)-)-methyltransferase.